Here is a 123-residue protein sequence, read N- to C-terminus: Neuropeptide-like peptides nlp-40 (123 aa).

A signal peptide spans Met-1 to Ala-17. Propeptides lie at residues Arg-30–Ala-31, Lys-66–Arg-67, and Lys-75–Arg-76.

Expressed in intestinal cells.

It is found in the secreted. It localises to the cytoplasmic vesicle. Neuropeptide ligand for the G-protein coupled receptor aex-2. Activates and regulates the rhythmic calcium influx in DVB GABergic neurons during the defecation motor program, which is a coordinated series of three muscle contractions that occurs every 45 seconds. In Caenorhabditis elegans, this protein is Neuropeptide-like peptides nlp-40.